Reading from the N-terminus, the 138-residue chain is Small ribosomal subunit protein uS11c (138 aa).

A disordered region spans residues 1-25 (MAKSIPRTGSRRNVRSGSRKSTRRI). Residues 9–25 (GSRRNVRSGSRKSTRRI) are compositionally biased toward basic residues.

The protein belongs to the universal ribosomal protein uS11 family. As to quaternary structure, part of the 30S ribosomal subunit.

The protein localises to the plastid. It is found in the chloroplast. The chain is Small ribosomal subunit protein uS11c from Eucalyptus globulus subsp. globulus (Tasmanian blue gum).